We begin with the raw amino-acid sequence, 267 residues long: Small ribosomal subunit protein mS23 (267 aa).

Positions 230 to 267 are disordered; sequence VKTASKDGKSSNGSMGAEDVVEKTTSAWETEFVEEESS.

This sequence belongs to the mitochondrion-specific ribosomal protein mS23 family. As to quaternary structure, component of the mitochondrial small ribosomal subunit.

It localises to the mitochondrion. The sequence is that of Small ribosomal subunit protein mS23 (RSM25) from Meyerozyma guilliermondii (strain ATCC 6260 / CBS 566 / DSM 6381 / JCM 1539 / NBRC 10279 / NRRL Y-324) (Yeast).